Here is a 363-residue protein sequence, read N- to C-terminus: Phosphoserine aminotransferase (363 aa).

An L-glutamate-binding site is contributed by R42. Residues 76–77 (GR), W102, T156, D175, and Q198 each bind pyridoxal 5'-phosphate. Residue K199 is modified to N6-(pyridoxal phosphate)lysine. A pyridoxal 5'-phosphate-binding site is contributed by 240 to 241 (NT).

It belongs to the class-V pyridoxal-phosphate-dependent aminotransferase family. SerC subfamily. Homodimer. Pyridoxal 5'-phosphate is required as a cofactor.

The protein resides in the cytoplasm. The catalysed reaction is O-phospho-L-serine + 2-oxoglutarate = 3-phosphooxypyruvate + L-glutamate. It catalyses the reaction 4-(phosphooxy)-L-threonine + 2-oxoglutarate = (R)-3-hydroxy-2-oxo-4-phosphooxybutanoate + L-glutamate. Its pathway is amino-acid biosynthesis; L-serine biosynthesis; L-serine from 3-phospho-D-glycerate: step 2/3. It functions in the pathway cofactor biosynthesis; pyridoxine 5'-phosphate biosynthesis; pyridoxine 5'-phosphate from D-erythrose 4-phosphate: step 3/5. Functionally, catalyzes the reversible conversion of 3-phosphohydroxypyruvate to phosphoserine and of 3-hydroxy-2-oxo-4-phosphonooxybutanoate to phosphohydroxythreonine. The sequence is that of Phosphoserine aminotransferase from Shewanella baltica (strain OS223).